Reading from the N-terminus, the 721-residue chain is Translation initiation factor eIF2B subunit epsilon (721 aa).

The segment covering 1–13 (MAAPVVAPPGVVV) has biased composition (low complexity). The segment at 1-40 (MAAPVVAPPGVVVSRANKRSGAGPGGSGGGGARGAEEEPP) is disordered. Ala-2 is modified (N-acetylalanine). Arg-19 is modified (omega-N-methylarginine). Positions 22–33 (AGPGGSGGGGAR) are enriched in gly residues. Residue Ser-27 is modified to Phosphoserine. Glycyl lysine isopeptide (Lys-Gly) (interchain with G-Cter in ubiquitin) cross-links involve residues Lys-61 and Lys-103. Ser-130 is modified (phosphoserine). Glycyl lysine isopeptide (Lys-Gly) (interchain with G-Cter in ubiquitin) cross-links involve residues Lys-141 and Lys-217. Thr-322 is modified (phosphothreonine). Disordered stretches follow at residues 444–483 (PEGSVISLHPPDAEEDEDDGEFSDDSGADQEKDKVKMKGY) and 523–547 (EESESESEQSMDSEEPDSRGGSPQM). Residues Ser-450, Ser-466, Ser-469, Ser-532, and Ser-540 each carry the phosphoserine modification. Acidic residues-rich tracts occupy residues 456 to 471 (AEEDEDDGEFSDDSGA) and 523 to 537 (EESESESEQSMDSEE). In terms of domain architecture, W2 spans 543–720 (GSPQMDDIKV…KEAEEESSED (178 aa)). The residue at position 544 (Ser-544) is a Phosphoserine; by DYRK2. The residue at position 717 (Ser-717) is a Phosphoserine.

Belongs to the eIF-2B gamma/epsilon subunits family. As to quaternary structure, component of the translation initiation factor 2B (eIF2B) complex which is a heterodecamer of two sets of five different subunits: alpha, beta, gamma, delta and epsilon. Subunits alpha, beta and delta comprise a regulatory subcomplex and subunits epsilon and gamma comprise a catalytic subcomplex. Within the complex, the hexameric regulatory complex resides at the center, with the two heterodimeric catalytic subcomplexes bound on opposite sides. Phosphorylated at Ser-544 by DYRK2; this is required for subsequent phosphorylation by GSK3B. Phosphorylated on serine and threonine residues by GSK3B; phosphorylation inhibits its function. In terms of processing, polyubiquitinated, probably by NEDD4.

It is found in the cytoplasm. It localises to the cytosol. Activated by the chemical integrated stress response (ISR) inhibitor ISRIB which stimulates guanine nucleotide exchange factor activity for both phosphorylated and unphosphorylated eIF2. Its function is as follows. Acts as a component of the translation initiation factor 2B (eIF2B) complex, which catalyzes the exchange of GDP for GTP on eukaryotic initiation factor 2 (eIF2) gamma subunit. Its guanine nucleotide exchange factor activity is repressed when bound to eIF2 complex phosphorylated on the alpha subunit, thereby limiting the amount of methionyl-initiator methionine tRNA available to the ribosome and consequently global translation is repressed. The chain is Translation initiation factor eIF2B subunit epsilon (EIF2B5) from Homo sapiens (Human).